Reading from the N-terminus, the 225-residue chain is NAD(P)H-quinone oxidoreductase subunit K, chloroplastic (225 aa).

Positions 43, 44, 108, and 139 each coordinate [4Fe-4S] cluster.

The protein belongs to the complex I 20 kDa subunit family. As to quaternary structure, NDH is composed of at least 16 different subunits, 5 of which are encoded in the nucleus. It depends on [4Fe-4S] cluster as a cofactor.

It localises to the plastid. Its subcellular location is the chloroplast thylakoid membrane. It catalyses the reaction a plastoquinone + NADH + (n+1) H(+)(in) = a plastoquinol + NAD(+) + n H(+)(out). It carries out the reaction a plastoquinone + NADPH + (n+1) H(+)(in) = a plastoquinol + NADP(+) + n H(+)(out). In terms of biological role, NDH shuttles electrons from NAD(P)H:plastoquinone, via FMN and iron-sulfur (Fe-S) centers, to quinones in the photosynthetic chain and possibly in a chloroplast respiratory chain. The immediate electron acceptor for the enzyme in this species is believed to be plastoquinone. Couples the redox reaction to proton translocation, and thus conserves the redox energy in a proton gradient. The protein is NAD(P)H-quinone oxidoreductase subunit K, chloroplastic of Arabidopsis thaliana (Mouse-ear cress).